Consider the following 169-residue polypeptide: Macro domain-containing protein SCO6450 (169 aa).

The region spanning 1 to 169 (MTGITLVQGD…AYEAFAARLG (169 aa)) is the Macro domain.

It belongs to the MacroD-type family.

The polypeptide is Macro domain-containing protein SCO6450 (Streptomyces coelicolor (strain ATCC BAA-471 / A3(2) / M145)).